Here is a 227-residue protein sequence, read N- to C-terminus: Prolactin (227 aa).

A signal peptide spans 1–28 (MNIKGSPWKGSLLLLLVSNLLLCQSVAP). Cys-32 and Cys-39 are disulfide-bonded. At Ser-54 the chain carries Phosphoserine. N-linked (GlcNAc...) asparagine; partial glycosylation occurs at Asn-59. 4 positions are modified to phosphoserine: Ser-62, Ser-118, Ser-163, and Ser-194. 2 cysteine pairs are disulfide-bonded: Cys-86-Cys-202 and Cys-219-Cys-227.

Belongs to the somatotropin/prolactin family. As to quaternary structure, interacts with PRLR.

It is found in the secreted. Prolactin acts primarily on the mammary gland by promoting lactation. This Homo sapiens (Human) protein is Prolactin (PRL).